An 806-amino-acid polypeptide reads, in one-letter code: 85/88 kDa calcium-independent phospholipase A2 (806 aa).

9 ANK repeats span residues 120–147, 151–181, 185–215, 219–248, 251–281, 286–312, 316–345, 349–378, and 382–403; these read WSVA…ANCA, EGCT…QMDV, KGET…GLNQ, QGLT…RCNI, PNGY…QIHS, YGAS…NVNS, AGNT…NADA, HGNT…EVDT, and FGET…KAIL. 2 helical membrane-spanning segments follow: residues 480 to 500 and 511 to 531; these read LLCL…LIAI and LFDW…ILHS. The 185-residue stretch at 481–665 folds into the PNPLA domain; it reads LCLDGGGVKG…LANNPTLDAM (185 aa). Positions 485 to 490 match the GXGXXG motif; it reads GGGVKG. Positions 517-521 match the GXSXG motif; it reads GTSTG. S519 functions as the Nucleophile in the catalytic mechanism. The Proton acceptor role is filled by D652. The short motif at 652–654 is the DGA/G element; sequence DGG. The segment at 677 to 686 is calmodulin-binding (1-9-14 motif); sequence RKGQANKVKK. Residues 748 to 759 are calmodulin-binding (IQ motif); that stretch reads AWCEMVGIQYFR.

Homodimer formed by catalytic domains tightly interacting through a large hydrophobic interface. The contact area involves 3 alpha helices, several loops and a part of the beta sheet from each monomer. Both active sites of the dimer are in close proximity adopting an open conformation that provide sufficient space for phospholipid access and favoring cooperativity in deacylation-reacylation reactions. Each monomer has 9 ankyrin repeats stacked side-by-side in an elongated structure oriented outwards from the catalytic core. In terms of tissue distribution, four different transcripts were found to be expressed in a distinct tissue distribution.

It localises to the cytoplasm. The protein localises to the cell membrane. The protein resides in the mitochondrion. Its subcellular location is the cell projection. It is found in the pseudopodium. The enzyme catalyses a 1,2-diacyl-sn-glycero-3-phosphocholine + H2O = a 1-acyl-sn-glycero-3-phosphocholine + a fatty acid + H(+). It catalyses the reaction a 1-O-alkyl-2-acyl-sn-glycero-3-phosphocholine + H2O = a 1-O-alkyl-sn-glycero-3-phosphocholine + a fatty acid + H(+). It carries out the reaction 1,2-dihexadecanoyl-sn-glycero-3-phosphocholine + H2O = 1-hexadecanoyl-sn-glycero-3-phosphocholine + hexadecanoate + H(+). The catalysed reaction is 1-hexadecanoyl-2-(9Z-octadecenoyl)-sn-glycero-3-phosphocholine + H2O = 1-hexadecanoyl-sn-glycero-3-phosphocholine + (9Z)-octadecenoate + H(+). The enzyme catalyses 1-hexadecanoyl-2-(9Z,12Z-octadecadienoyl)-sn-glycero-3-phosphocholine + H2O = (9Z,12Z)-octadecadienoate + 1-hexadecanoyl-sn-glycero-3-phosphocholine + H(+). It catalyses the reaction 1-hexadecanoyl-2-(5Z,8Z,11Z,14Z-eicosatetraenoyl)-sn-glycero-3-phosphocholine + H2O = 1-hexadecanoyl-sn-glycero-3-phosphocholine + (5Z,8Z,11Z,14Z)-eicosatetraenoate + H(+). It carries out the reaction 1-octadecanoyl-2-(5Z,8Z,11Z,14Z-eicosatetraenoyl)-sn-glycero-3-phosphocholine + H2O = 1-octadecanoyl-sn-glycero-3-phosphocholine + (5Z,8Z,11Z,14Z)-eicosatetraenoate + H(+). The catalysed reaction is 1-hexadecanoyl-2-(5Z,8Z,11Z,14Z-eicosatetraenoyl)-sn-glycero-3-phosphoethanolamine + H2O = 1-hexadecanoyl-sn-glycero-3-phosphoethanolamine + (5Z,8Z,11Z,14Z)-eicosatetraenoate + H(+). The enzyme catalyses 1,2-dihexadecanoyl-sn-glycero-3-phosphate + H2O = 1-hexadecanoyl-sn-glycero-3-phosphate + hexadecanoate + H(+). It catalyses the reaction a 1-acyl-sn-glycero-3-phosphocholine + H2O = sn-glycerol 3-phosphocholine + a fatty acid + H(+). It carries out the reaction 1-hexadecanoyl-sn-glycero-3-phosphocholine + H2O = sn-glycerol 3-phosphocholine + hexadecanoate + H(+). The catalysed reaction is 1-(5Z,8Z,11Z,14Z-eicosatetraenoyl)-sn-glycero-3-phosphocholine + H2O = sn-glycerol 3-phosphocholine + (5Z,8Z,11Z,14Z)-eicosatetraenoate + H(+). The enzyme catalyses 2-(5Z,8Z,11Z,14Z)-eicosatetraenoyl-sn-glycero-3-phosphocholine + H2O = sn-glycerol 3-phosphocholine + (5Z,8Z,11Z,14Z)-eicosatetraenoate + H(+). It catalyses the reaction 1-O-hexadecyl-2-(5Z,8Z,11Z,14Z)-eicosatetraenoyl-sn-glycero-3-phosphocholine + H2O = 1-O-hexadecyl-sn-glycero-3-phosphocholine + (5Z,8Z,11Z,14Z)-eicosatetraenoate + H(+). It carries out the reaction 1-O-hexadecyl-2-acetyl-sn-glycero-3-phosphocholine + H2O = 1-O-hexadecyl-sn-glycero-3-phosphocholine + acetate + H(+). The catalysed reaction is hexadecanoyl-CoA + H2O = hexadecanoate + CoA + H(+). The enzyme catalyses 1',3'-bis[1,2-di-(9Z-octadecenoyl)-sn-glycero-3-phospho]-glycerol + H2O = 1'-[1,2-di-(9Z-octadecenoyl)-sn-glycero-3-phospho]-3'-[1-(9Z-octadecenoyl)-sn-glycero-3-phospho]-glycerol + (9Z)-octadecenoate + H(+). It catalyses the reaction 1'-[1,2-di-(9Z-octadecenoyl)-sn-glycero-3-phospho]-3'-[1-(9Z-octadecenoyl)-sn-glycero-3-phospho]-glycerol + H2O = 1',3'-bis-[1-(9Z-octadecenoyl)-sn-glycero-3-phospho]-glycerol + (9Z)-octadecenoate + H(+). It carries out the reaction 1',3'-bis-[1,2-di-(9Z,12Z-octadecadienoyl)-sn-glycero-3-phospho]-glycerol + H2O = 1'-[1,2-di-(9Z,12Z-octadecadienoyl)-sn-glycero-3-phospho]-3'-[1-(9Z,12Z-octadecadienoyl)-sn-glycero-3-phospho]-glycerol + (9Z,12Z)-octadecadienoate + H(+). The catalysed reaction is 1-octadecanoyl-2-(15-hydroxy-(5Z,8Z,11Z,13E)-eicosatetraenoyl)-sn-glycero-3-phosphoethanolamine + H2O = 1-octadecanoyl-sn-glycero-3-phosphoethanolamine + 15-hydroxy-(5Z,8Z,11Z,13E)-eicosatetraenoate + H(+). Activated by ATP. Inhibited by calcium-activated calmodulin. Inhibited by bromoenol lactone (BEL). In terms of biological role, calcium-independent phospholipase involved in phospholipid remodeling with implications in cellular membrane homeostasis, mitochondrial integrity and signal transduction. Hydrolyzes the ester bond of the fatty acyl group attached at sn-1 or sn-2 position of phospholipids (phospholipase A1 and A2 activity respectively), producing lysophospholipids that are used in deacylation-reacylation cycles. Hydrolyzes both saturated and unsaturated long fatty acyl chains in various glycerophospholipid classes such as phosphatidylcholines, phosphatidylethanolamines and phosphatidates, with a preference for hydrolysis at sn-2 position. Can further hydrolyze lysophospholipids carrying saturated fatty acyl chains (lysophospholipase activity). Upon oxidative stress, contributes to remodeling of mitochondrial phospholipids in pancreatic beta cells, in a repair mechanism to reduce oxidized lipid content. Preferentially hydrolyzes oxidized polyunsaturated fatty acyl chains from cardiolipins, yielding monolysocardiolipins that can be reacylated with unoxidized fatty acyls to regenerate native cardiolipin species. Hydrolyzes oxidized glycerophosphoethanolamines present in pancreatic islets, releasing oxidized polyunsaturated fatty acids such as hydroxyeicosatetraenoates (HETEs). Has thioesterase activity toward fatty-acyl CoA releasing CoA-SH known to facilitate fatty acid transport and beta-oxidation in mitochondria particularly in skeletal muscle. Plays a role in regulation of membrane dynamics and homeostasis. Selectively hydrolyzes sn-2 arachidonoyl group in plasmalogen phospholipids, structural components of lipid rafts and myelin. Regulates F-actin polymerization at the pseudopods, which is required for both speed and directionality of MCP1/CCL2-induced monocyte chemotaxis. Targets membrane phospholipids to produce potent lipid signaling messengers. Generates lysophosphatidate (LPA, 1-acyl-glycerol-3-phosphate), which acts via G-protein receptors in various cell types. Has phospholipase A2 activity toward platelet-activating factor (PAF, 1-O-alkyl-2-acetyl-sn-glycero-3-phosphocholine), likely playing a role in inactivation of this potent pro-inflammatory signaling lipid. In response to glucose, amplifies calcium influx in pancreatic beta cells to promote INS secretion. Functionally, lacks the catalytic domain and may act as a negative regulator of the catalytically active isoforms. The chain is 85/88 kDa calcium-independent phospholipase A2 (PLA2G6) from Homo sapiens (Human).